We begin with the raw amino-acid sequence, 476 residues long: Cysteine--tRNA ligase (476 aa).

A Zn(2+)-binding site is contributed by Cys-29. The 'HIGH' region motif lies at 31 to 41 (PTVYDYPHLGH). Zn(2+) contacts are provided by Cys-209, His-234, and Glu-238. The short motif at 266–270 (KMSKS) is the 'KMSKS' region element. Residue Lys-269 participates in ATP binding.

Belongs to the class-I aminoacyl-tRNA synthetase family. The cofactor is Zn(2+).

It is found in the cytoplasm. The catalysed reaction is tRNA(Cys) + L-cysteine + ATP = L-cysteinyl-tRNA(Cys) + AMP + diphosphate. This Pyrococcus horikoshii (strain ATCC 700860 / DSM 12428 / JCM 9974 / NBRC 100139 / OT-3) protein is Cysteine--tRNA ligase (cysS).